The following is a 442-amino-acid chain: Methylenetetrahydrofolate--tRNA-(uracil-5-)-methyltransferase TrmFO 1 (442 aa).

9 to 14 (GAGLAG) contacts FAD.

This sequence belongs to the MnmG family. TrmFO subfamily. The cofactor is FAD.

It localises to the cytoplasm. The catalysed reaction is uridine(54) in tRNA + (6R)-5,10-methylene-5,6,7,8-tetrahydrofolate + NADH + H(+) = 5-methyluridine(54) in tRNA + (6S)-5,6,7,8-tetrahydrofolate + NAD(+). It carries out the reaction uridine(54) in tRNA + (6R)-5,10-methylene-5,6,7,8-tetrahydrofolate + NADPH + H(+) = 5-methyluridine(54) in tRNA + (6S)-5,6,7,8-tetrahydrofolate + NADP(+). Its function is as follows. Catalyzes the folate-dependent formation of 5-methyl-uridine at position 54 (M-5-U54) in all tRNAs. The chain is Methylenetetrahydrofolate--tRNA-(uracil-5-)-methyltransferase TrmFO 1 from Mesoplasma florum (strain ATCC 33453 / NBRC 100688 / NCTC 11704 / L1) (Acholeplasma florum).